We begin with the raw amino-acid sequence, 335 residues long: Transcription factor bHLH63 (335 aa).

Residues 110–160 (MTMNRDDLVEEGEEEKSKITEQNNGSTKSIKKMKHKAKKEENNFSNDSSKV) are disordered. The bHLH domain occupies 178–228 (QATDSHSIAERVRREKISERMKFLQDLVPGCDKITGKAGMLDEIINYVQSL).

In terms of assembly, homodimer. Interacts with IBH1. Binds reversibly to CRY2 after blue light illumination. As to expression, expressed constitutively in roots, leaves, and stems.

It localises to the nucleus. In terms of biological role, transcription factor that binds DNA to G box 5'-CACGTG-3' and, to a lower extent, to E-box 5'-CANNTG-3' in vitro. Binds to chromatin DNA of the FT gene and promotes its expression, and thus triggers flowering in response to blue light. The chain is Transcription factor bHLH63 (BHLH63) from Arabidopsis thaliana (Mouse-ear cress).